A 503-amino-acid polypeptide reads, in one-letter code: Transcription termination/antitermination protein NusA (503 aa).

The region spanning 139 to 203 is the S1 motif domain; sequence GDIINGIVKR…KGPQIFLSRV (65 aa). The KH domain maps to 308-378; sequence SHKVEVVVSQ…LDVEEVIGQL (71 aa).

Belongs to the NusA family. As to quaternary structure, monomer. Binds directly to the core enzyme of the DNA-dependent RNA polymerase and to nascent RNA.

It localises to the cytoplasm. In terms of biological role, participates in both transcription termination and antitermination. The polypeptide is Transcription termination/antitermination protein NusA (Rickettsia prowazekii (strain Madrid E)).